Consider the following 135-residue polypeptide: MIDAKQLNSLALAYMGDAVYEQYIRYHLLQKGKVRPNQLHRLGTSFVSAKAQAKVVYHLLETAFLTEEEEAVLRRGRNANSGTVPKNTDVQTYRHSTAFEALIGYHHLLNNRERLDEIVYKAIAVLEEQEGGTSS.

The active site involves aspartate 17.

It belongs to the MrnC RNase family. In terms of assembly, homodimer. Requires Mg(2+) as cofactor.

The protein resides in the cytoplasm. Functionally, involved in correct processing of both the 5' and 3' ends of 23S rRNA precursor. Processes 30S rRNA precursor transcript even in absence of ribonuclease 3 (Rnc); Rnc processes 30S rRNA into smaller rRNA precursors. The protein is Mini-ribonuclease 3 of Bacillus cereus (strain ATCC 14579 / DSM 31 / CCUG 7414 / JCM 2152 / NBRC 15305 / NCIMB 9373 / NCTC 2599 / NRRL B-3711).